The sequence spans 247 residues: Orotidine 5'-phosphate decarboxylase (247 aa).

Substrate is bound by residues D16, K38, 66-75 (DLKFHDIPNT), T130, R191, Q200, G220, and R221. The active-site Proton donor is the K68.

It belongs to the OMP decarboxylase family. Type 1 subfamily. As to quaternary structure, homodimer.

The catalysed reaction is orotidine 5'-phosphate + H(+) = UMP + CO2. Its pathway is pyrimidine metabolism; UMP biosynthesis via de novo pathway; UMP from orotate: step 2/2. Functionally, catalyzes the decarboxylation of orotidine 5'-monophosphate (OMP) to uridine 5'-monophosphate (UMP). The sequence is that of Orotidine 5'-phosphate decarboxylase from Rhodospirillum rubrum (strain ATCC 11170 / ATH 1.1.1 / DSM 467 / LMG 4362 / NCIMB 8255 / S1).